The chain runs to 394 residues: MNGNRFGRLFEVTTYGESHGPGMGVVVSGCPAGVALDERMIQDELDRRKPGQSMITTSRGEPDEVSIQSGLQDGYTTGTPIGMTIENKDAESGKYEPFVTAPRPSHGDYTYSAKFGTRNWGGGGRSSARETVNWVAAGAVAKAVLAQSDHDVRVKAHVNQIGEIEAPDVSFEDIREHSEDNEVRCADPETAERMRALIDDYQERGDSIGGSIYFEARGVPRGLGAPRFDSVPARLGQALFAIPATTSVEFGLGRDARSVAGKQRNEDWTVADGDEDHVVADEGDPIPAGNDHGGLQGGITTGEPIYGEASWHAPTSIPKTQATVDWETGEEKAVTVTGRHDPSLPPRAVPVVEAMLYCTILDFMLLGGRINPDRLDGHPGQYDTDYHPSSPRNE.

Position 48 (Arg-48) interacts with NADP(+). A disordered region spans residues Gln-52–Ala-90. A compositionally biased stretch (polar residues) spans Ser-66–Thr-79. Residues Arg-125–Ser-127, Gly-297, His-312–Ser-316, and Arg-339 contribute to the FMN site.

It belongs to the chorismate synthase family. FMNH2 is required as a cofactor.

It carries out the reaction 5-O-(1-carboxyvinyl)-3-phosphoshikimate = chorismate + phosphate. Its pathway is metabolic intermediate biosynthesis; chorismate biosynthesis; chorismate from D-erythrose 4-phosphate and phosphoenolpyruvate: step 7/7. Catalyzes the anti-1,4-elimination of the C-3 phosphate and the C-6 proR hydrogen from 5-enolpyruvylshikimate-3-phosphate (EPSP) to yield chorismate, which is the branch point compound that serves as the starting substrate for the three terminal pathways of aromatic amino acid biosynthesis. This reaction introduces a second double bond into the aromatic ring system. This is Chorismate synthase from Halobacterium salinarum (strain ATCC 700922 / JCM 11081 / NRC-1) (Halobacterium halobium).